A 194-amino-acid polypeptide reads, in one-letter code: GTP cyclohydrolase 1 (194 aa).

Zn(2+)-binding residues include C83, H86, and C155.

The protein belongs to the GTP cyclohydrolase I family. Toroid-shaped homodecamer, composed of two pentamers of five dimers.

It carries out the reaction GTP + H2O = 7,8-dihydroneopterin 3'-triphosphate + formate + H(+). The protein operates within cofactor biosynthesis; 7,8-dihydroneopterin triphosphate biosynthesis; 7,8-dihydroneopterin triphosphate from GTP: step 1/1. This is GTP cyclohydrolase 1 from Streptococcus pyogenes serotype M3 (strain ATCC BAA-595 / MGAS315).